Reading from the N-terminus, the 428-residue chain is Magnesium transporter MRS2-C (428 aa).

Helical transmembrane passes span 364–384 and 400–420; these read LLLTTATFVVAIFGVVSGVFG and WTLVITGVCGLVIFCCFIWYF. The Required for magnesium transport activity signature appears at 384 to 386; the sequence is GMN.

Belongs to the CorA metal ion transporter (MIT) (TC 1.A.35.5) family.

It is found in the membrane. Magnesium transporter that may mediate the influx of magnesium. This Oryza sativa subsp. indica (Rice) protein is Magnesium transporter MRS2-C.